Consider the following 416-residue polypeptide: NADH-quinone oxidoreductase subunit D (416 aa).

The protein belongs to the complex I 49 kDa subunit family. In terms of assembly, NDH-1 is composed of 14 different subunits. Subunits NuoB, C, D, E, F, and G constitute the peripheral sector of the complex.

The protein resides in the cell inner membrane. The catalysed reaction is a quinone + NADH + 5 H(+)(in) = a quinol + NAD(+) + 4 H(+)(out). Its function is as follows. NDH-1 shuttles electrons from NADH, via FMN and iron-sulfur (Fe-S) centers, to quinones in the respiratory chain. The immediate electron acceptor for the enzyme in this species is believed to be ubiquinone. Couples the redox reaction to proton translocation (for every two electrons transferred, four hydrogen ions are translocated across the cytoplasmic membrane), and thus conserves the redox energy in a proton gradient. This chain is NADH-quinone oxidoreductase subunit D, found in Caulobacter sp. (strain K31).